We begin with the raw amino-acid sequence, 236 residues long: Ribose-5-phosphate isomerase A (236 aa).

Residues 29–32 (SGST), 86–89 (DGAD), and 99–102 (KGGG) each bind substrate. The active-site Proton acceptor is glutamate 108. Lysine 126 is a substrate binding site.

It belongs to the ribose 5-phosphate isomerase family. Homodimer.

The catalysed reaction is aldehydo-D-ribose 5-phosphate = D-ribulose 5-phosphate. It functions in the pathway carbohydrate degradation; pentose phosphate pathway; D-ribose 5-phosphate from D-ribulose 5-phosphate (non-oxidative stage): step 1/1. Catalyzes the reversible conversion of ribose-5-phosphate to ribulose 5-phosphate. The sequence is that of Ribose-5-phosphate isomerase A from Prochlorococcus marinus (strain NATL2A).